The chain runs to 95 residues: Co-chaperonin GroES (95 aa).

Belongs to the GroES chaperonin family. As to quaternary structure, heptamer of 7 subunits arranged in a ring. Interacts with the chaperonin GroEL.

Its subcellular location is the cytoplasm. In terms of biological role, together with the chaperonin GroEL, plays an essential role in assisting protein folding. The GroEL-GroES system forms a nano-cage that allows encapsulation of the non-native substrate proteins and provides a physical environment optimized to promote and accelerate protein folding. GroES binds to the apical surface of the GroEL ring, thereby capping the opening of the GroEL channel. The protein is Co-chaperonin GroES of Novosphingobium aromaticivorans (strain ATCC 700278 / DSM 12444 / CCUG 56034 / CIP 105152 / NBRC 16084 / F199).